A 272-amino-acid chain; its full sequence is Alcohol dehydrogenase-related 31 kDa protein (272 aa).

Tyrosine 11–leucine 34 is a binding site for NAD(+). Serine 139 provides a ligand contact to substrate. The Proton acceptor role is filled by tyrosine 152.

It belongs to the short-chain dehydrogenases/reductases (SDR) family.

This chain is Alcohol dehydrogenase-related 31 kDa protein (Adhr), found in Drosophila teissieri (Fruit fly).